A 336-amino-acid chain; its full sequence is Cinnamoyl-CoA reductase 2 (336 aa).

Residues 21 to 27 (GAGGFIA), arginine 46, lysine 52, 72 to 73 (DL), 92 to 94 (TAS), tyrosine 165, lysine 169, 192 to 195 (PVVV), and serine 207 each bind NADP(+). The cysteines at positions 158 and 166 are disulfide-linked. Lysine 169 functions as the Proton donor in the catalytic mechanism.

The protein belongs to the NAD(P)-dependent epimerase/dehydratase family. Dihydroflavonol-4-reductase subfamily. The formation of a reversible disulfide bond reduces activity by perturbing the positioning of nearby catalytic residues. As to expression, mainly expressed in roots and stems, especially at the second internode and, to a lower extent, in leaves and flowers. Localized in vascular elements, with weaker expression in the interfascicular (xylem fiber) region.

Its subcellular location is the cytoplasm. It catalyses the reaction (E)-coniferaldehyde + NADP(+) + CoA = (E)-feruloyl-CoA + NADPH + H(+). The enzyme catalyses (E)-4-coumaraldehyde + NADP(+) + CoA = (E)-4-coumaroyl-CoA + NADPH + H(+). The catalysed reaction is (E)-sinapaldehyde + NADP(+) + CoA = (E)-sinapoyl-CoA + NADPH + H(+). It carries out the reaction (E)-cinnamaldehyde + NADP(+) + CoA = (E)-cinnamoyl-CoA + NADPH + H(+). It catalyses the reaction (E)-caffeyl aldehyde + NADP(+) + CoA = (E)-caffeoyl-CoA + NADPH + H(+). It functions in the pathway aromatic compound metabolism; phenylpropanoid biosynthesis. Involved in the latter stages of lignin biosynthesis. Catalyzes one of the last steps of monolignol biosynthesis, the conversion of cinnamoyl-CoAs into their corresponding cinnamaldehydes. Mediates the conversion of caffeoyl-CoA and coumaroyl-CoA to caffaldehyde and coumaraldehyde, respectively. Also active, with a lower efficiency, toward feruloyl-CoA and sinapoyl-CoA. Involved in the production of floral volatile phenylpropanoids in flowers of fragrant cultivars from cinnamic acid, a common precursor with the anthocyanin biosynthesis pathway involved in flower pigmentation. The chain is Cinnamoyl-CoA reductase 2 from Medicago truncatula (Barrel medic).